Here is a 127-residue protein sequence, read N- to C-terminus: Venom protein family 16 protein 1 (127 aa).

The first 18 residues, 1 to 18, serve as a signal peptide directing secretion; that stretch reads MWIWYSLLFFGVCHLAHS.

Expressed by the venom gland (anterior main gland) (at protein level).

The protein resides in the secreted. This chain is Venom protein family 16 protein 1, found in Platymeris rhadamanthus (Red spot assassin bug).